The sequence spans 550 residues: Arginine--tRNA ligase (550 aa).

The 'HIGH' region motif lies at 130-140; sequence ANPTGPIHIGG.

This sequence belongs to the class-I aminoacyl-tRNA synthetase family. As to quaternary structure, monomer.

It is found in the cytoplasm. It catalyses the reaction tRNA(Arg) + L-arginine + ATP = L-arginyl-tRNA(Arg) + AMP + diphosphate. The polypeptide is Arginine--tRNA ligase (argS) (Mycobacterium tuberculosis (strain CDC 1551 / Oshkosh)).